A 1901-amino-acid polypeptide reads, in one-letter code: Methylcytosine dioxygenase tet3 (1901 aa).

Residues 58–99 form a CXXC-type zinc finger; that stretch reads SNKKRKRCGVCVPCLRKEPCGACYNCVNRSTSHQICKMRKCE. The Zn(2+) site is built by C65, C68, C71, C77, C80, C83, C93, and C98. 4 disordered regions span residues 434 to 455, 602 to 658, 751 to 787, and 808 to 867; these read KNAL…KKSS, WWVP…EGSA, KDQC…QNDL, and DFSL…PVSR. 2 stretches are compositionally biased toward polar residues: residues 442-455 and 602-614; these read SPRQ…KKSS and WWVP…PVSK. The segment covering 640-652 has biased composition (basic residues); that stretch reads KPQRKQVQIKKPK. Residues 758-771 are compositionally biased toward low complexity; the sequence is STHDTSSSSGQGDS. The segment covering 847–867 has biased composition (polar residues); that stretch reads ENSTKPATHSNPALSNNPVSR. Zn(2+) contacts are provided by C957, C959, C1017, H1043, and C1045. 2-oxoglutarate is bound at residue R1085. Residues C1095, C1097, C1113, C1122, and C1182 each coordinate Zn(2+). A 2-oxoglutarate-binding site is contributed by C1198. Position 1204 (H1204) interacts with Zn(2+). Fe cation-binding residues include H1206 and D1208. Residue H1240 participates in 2-oxoglutarate binding. 4 disordered regions span residues 1282 to 1338, 1457 to 1501, 1591 to 1624, and 1680 to 1745; these read SEPA…QQTK, YGSE…VETT, SNAP…PGKV, and SATP…DEEI. Positions 1291 to 1325 are enriched in basic and acidic residues; that stretch reads RQLEAKKAAAEKKKLQKEKLVSPDKTKQEPSDKKT. Polar residues predominate over residues 1326–1338; it reads CQQNPGVPQQQTK. Residues 1465 to 1474 are compositionally biased toward basic and acidic residues; the sequence is SFRRSSEVPH. Positions 1477 to 1487 are enriched in polar residues; the sequence is SLQNPSSQKSV. Composition is skewed to polar residues over residues 1680-1693 and 1702-1719; these read SATP…TPCS and SFPN…SQNH. H1780 is a Fe cation binding site. Position 1795–1797 (1795–1797) interacts with 2-oxoglutarate; it reads RIS.

Belongs to the TET family. The cofactor is Fe(2+). It depends on Zn(2+) as a cofactor.

Its subcellular location is the nucleus. The protein localises to the chromosome. The enzyme catalyses a 5-methyl-2'-deoxycytidine in DNA + 2-oxoglutarate + O2 = a 5-hydroxymethyl-2'-deoxycytidine in DNA + succinate + CO2. It catalyses the reaction a 5-hydroxymethyl-2'-deoxycytidine in DNA + 2-oxoglutarate + O2 = a 5-formyl-2'-deoxycytidine in DNA + succinate + CO2 + H2O. The catalysed reaction is a 5-formyl-2'-deoxycytidine in DNA + 2-oxoglutarate + O2 = a 5-carboxyl-2'-deoxycytidine in DNA + succinate + CO2 + H(+). In terms of biological role, dioxygenase that catalyzes the conversion of the modified genomic base 5-methylcytosine (5mC) into 5-hydroxymethylcytosine (5hmC) and plays a key role in epigenetic chromatin reprogramming during embryonic development. Conversion of 5mC into 5hmC probably constitutes the first step in cytosine demethylation. Selectively binds to the promoter region of target genes and contributes to regulate the expression of numerous developmental genes, including pax6, rax, sox9 and six3. May also contribute to the regulation of target genes in ways that do not require its enzyme activity. The protein is Methylcytosine dioxygenase tet3 of Xenopus tropicalis (Western clawed frog).